We begin with the raw amino-acid sequence, 104 residues long: Large ribosomal subunit protein bL21 (104 aa).

Belongs to the bacterial ribosomal protein bL21 family. In terms of assembly, part of the 50S ribosomal subunit. Contacts protein L20.

This protein binds to 23S rRNA in the presence of protein L20. This chain is Large ribosomal subunit protein bL21, found in Clostridium botulinum (strain Kyoto / Type A2).